Reading from the N-terminus, the 159-residue chain is Phosphopantetheine adenylyltransferase (159 aa).

Residue serine 9 participates in substrate binding. Residues 9-10 (SF) and histidine 17 each bind ATP. 3 residues coordinate substrate: lysine 41, leucine 73, and lysine 87. ATP is bound by residues 88–90 (GLR), glutamate 98, and 122–128 (YSFLSSS).

Belongs to the bacterial CoaD family. Homohexamer. Requires Mg(2+) as cofactor.

The protein localises to the cytoplasm. The catalysed reaction is (R)-4'-phosphopantetheine + ATP + H(+) = 3'-dephospho-CoA + diphosphate. The protein operates within cofactor biosynthesis; coenzyme A biosynthesis; CoA from (R)-pantothenate: step 4/5. Its function is as follows. Reversibly transfers an adenylyl group from ATP to 4'-phosphopantetheine, yielding dephospho-CoA (dPCoA) and pyrophosphate. The chain is Phosphopantetheine adenylyltransferase from Streptomyces avermitilis (strain ATCC 31267 / DSM 46492 / JCM 5070 / NBRC 14893 / NCIMB 12804 / NRRL 8165 / MA-4680).